The sequence spans 415 residues: Erythronolide mycarosyltransferase (415 aa).

Belongs to the glycosyltransferase 28 family.

It catalyses the reaction dTDP-beta-L-mycarose + erythronolide B = 3-O-alpha-L-mycarosylerythronolide B + dTDP + H(+). Its function is as follows. Involved in the biosynthesis of the macrolide antibiotic erythromycin. Catalyzes the reversible transfer of mycarosyl from dTDP-beta-L-mycarose to erythronolide B to yield 3-alpha-L-mycarosylerythronolide B. It can also use TDP-beta-L-cladinose. This Saccharopolyspora erythraea (Streptomyces erythraeus) protein is Erythronolide mycarosyltransferase.